Consider the following 172-residue polypeptide: Ribosome maturation factor RimM (172 aa).

Residues 100 to 172 (PGEYYRVDLV…RIVVDWDPGF (73 aa)) form the PRC barrel domain.

It belongs to the RimM family. Binds ribosomal protein uS19.

The protein localises to the cytoplasm. Its function is as follows. An accessory protein needed during the final step in the assembly of 30S ribosomal subunit, possibly for assembly of the head region. Essential for efficient processing of 16S rRNA. May be needed both before and after RbfA during the maturation of 16S rRNA. It has affinity for free ribosomal 30S subunits but not for 70S ribosomes. In Methylococcus capsulatus (strain ATCC 33009 / NCIMB 11132 / Bath), this protein is Ribosome maturation factor RimM.